The primary structure comprises 427 residues: Glutamate-1-semialdehyde 2,1-aminomutase (427 aa).

N6-(pyridoxal phosphate)lysine is present on K267.

This sequence belongs to the class-III pyridoxal-phosphate-dependent aminotransferase family. HemL subfamily. In terms of assembly, homodimer. Pyridoxal 5'-phosphate serves as cofactor.

It localises to the cytoplasm. It carries out the reaction (S)-4-amino-5-oxopentanoate = 5-aminolevulinate. The protein operates within porphyrin-containing compound metabolism; protoporphyrin-IX biosynthesis; 5-aminolevulinate from L-glutamyl-tRNA(Glu): step 2/2. The polypeptide is Glutamate-1-semialdehyde 2,1-aminomutase (Geotalea daltonii (strain DSM 22248 / JCM 15807 / FRC-32) (Geobacter daltonii)).